The sequence spans 517 residues: Protein ERGIC-53 (517 aa).

The N-terminal stretch at 1–30 (MAVSRRRGPQAGAQSFFCALLLSFSQFVGS) is a signal peptide. At 31 to 484 (DGMGGDAAAP…DLPAFPSCLS (454 aa)) the chain is on the lumenal side. The L-type lectin-like domain maps to 52–275 (RRFEYKYSFK…DVLSFLTFQL (224 aa)). The a carbohydrate site is built by serine 96 and aspartate 129. The Ca(2+) site is built by aspartate 160, phenylalanine 162, aspartate 163, asparagine 164, aspartate 165, asparagine 169, and asparagine 170. An a carbohydrate-binding site is contributed by asparagine 164. Histidine 186 contacts a carbohydrate. Aspartate 189 lines the Ca(2+) pocket. Cysteine 198 and cysteine 238 are oxidised to a cystine. Position 259–261 (259–261 (GGL)) interacts with a carbohydrate. 2 disordered regions span residues 276–297 (TEPGKEPPTPEKDISEKEKEKY) and 377–396 (EISRRGAGTPGQPGQVSQQE). Residues 278 to 297 (PGKEPPTPEKDISEKEKEKY) are compositionally biased toward basic and acidic residues. Residue serine 433 is modified to Phosphoserine. A helical transmembrane segment spans residues 485 to 505 (TVHFVIFIVVQTVLFIGYIMY). Residues 506-517 (RTQQEAAAKKFF) lie on the Cytoplasmic side of the membrane. The segment at 506-517 (RTQQEAAAKKFF) is mediates interaction with RAB3GAP1, RAB3GAP2 and UBXN6. The ER export motif signature appears at 516–517 (FF).

As to quaternary structure, exists both as a covalent disulfide-linked homohexamer, and a complex of three disulfide-linked dimers non-covalently kept together. Interacts with MCFD2. May interact with TMEM115. Interacts with RAB3GAP1 and RAB3GAP2. Interacts with UBXN6. Interacts with SERPINA1/alpha1-antitrypsin. Interacts with BET1.

It is found in the endoplasmic reticulum-Golgi intermediate compartment membrane. Its subcellular location is the golgi apparatus membrane. The protein resides in the endoplasmic reticulum membrane. In terms of biological role, mannose-specific lectin. May recognize sugar residues of glycoproteins, glycolipids, or glycosylphosphatidyl inositol anchors and may be involved in the sorting or recycling of proteins, lipids, or both. The LMAN1-MCFD2 complex forms a specific cargo receptor for the ER-to-Golgi transport of selected proteins. The sequence is that of Protein ERGIC-53 (Lman1) from Rattus norvegicus (Rat).